Consider the following 336-residue polypeptide: Inactive serine/threonine-protein kinase BKN2 (336 aa).

The disordered stretch occupies residues 1–25; sequence MGNCLKPLKEQPPSASPKPLTIPSS. Residue glycine 2 is the site of N-myristoyl glycine attachment. Cysteine 4 carries the S-palmitoyl cysteine lipid modification. The Protein kinase domain occupies 52-332; that stretch reads YMVIKGNDNG…QVFDGLNDIA (281 aa).

It belongs to the protein kinase superfamily. Ser/Thr protein kinase family. In terms of assembly, component of an immune signaling complex made of, at least, SZE1, BKN2/SZE2, ZAR1 and ZED1. Interacts directly with ZAR1 and Pseudomonas syringae HOPZ1A at the plasma membrane. In terms of processing, N-terminal myristoylation is critical for plasma membrane localization and implication in defense responses. In terms of tissue distribution, expressed in stigma and ovaries in flowers, and in stems and seedlings.

The protein resides in the cell membrane. Its function is as follows. Together with SZE1 and ZED1, required for effector-triggered immunity (e.g. Pseudomonas syringae type III effector HopZ1a) via the activation of ZAR1, thus being essential for resistance against P. syringae pv. tomato DC3000 expressing HopZ1a. Collaboratively with BKN1, involved in compatible pollen-stigma interactions. This chain is Inactive serine/threonine-protein kinase BKN2, found in Arabidopsis thaliana (Mouse-ear cress).